Consider the following 346-residue polypeptide: Biotin synthase (346 aa).

The Radical SAM core domain occupies 38–256 (RQVQVSTLLS…IAVARIMMPT (219 aa)). The [4Fe-4S] cluster site is built by cysteine 53, cysteine 57, and cysteine 60. The [2Fe-2S] cluster site is built by cysteine 97, cysteine 128, cysteine 188, and arginine 260.

Belongs to the radical SAM superfamily. Biotin synthase family. As to quaternary structure, homodimer. [4Fe-4S] cluster is required as a cofactor. It depends on [2Fe-2S] cluster as a cofactor.

It catalyses the reaction (4R,5S)-dethiobiotin + (sulfur carrier)-SH + 2 reduced [2Fe-2S]-[ferredoxin] + 2 S-adenosyl-L-methionine = (sulfur carrier)-H + biotin + 2 5'-deoxyadenosine + 2 L-methionine + 2 oxidized [2Fe-2S]-[ferredoxin]. Its pathway is cofactor biosynthesis; biotin biosynthesis; biotin from 7,8-diaminononanoate: step 2/2. Its function is as follows. Catalyzes the conversion of dethiobiotin (DTB) to biotin by the insertion of a sulfur atom into dethiobiotin via a radical-based mechanism. This Escherichia coli O157:H7 protein is Biotin synthase.